The chain runs to 351 residues: uncharacterized protein (351 aa).

5 residues coordinate Mn(2+): D215, D226, H290, E319, and E333.

This sequence belongs to the peptidase M24B family. Requires Mn(2+) as cofactor.

This is an uncharacterized protein from Staphylococcus aureus (strain USA300).